Consider the following 529-residue polypeptide: Bifunctional purine biosynthesis protein PurH (529 aa).

The region spanning 1–148 is the MGS-like domain; that stretch reads MQQRRPVRRA…KNHKDVAIVV (148 aa). Lys-287 is subject to N6-acetyllysine.

It belongs to the PurH family.

The catalysed reaction is (6R)-10-formyltetrahydrofolate + 5-amino-1-(5-phospho-beta-D-ribosyl)imidazole-4-carboxamide = 5-formamido-1-(5-phospho-D-ribosyl)imidazole-4-carboxamide + (6S)-5,6,7,8-tetrahydrofolate. It catalyses the reaction IMP + H2O = 5-formamido-1-(5-phospho-D-ribosyl)imidazole-4-carboxamide. It functions in the pathway purine metabolism; IMP biosynthesis via de novo pathway; 5-formamido-1-(5-phospho-D-ribosyl)imidazole-4-carboxamide from 5-amino-1-(5-phospho-D-ribosyl)imidazole-4-carboxamide (10-formyl THF route): step 1/1. The protein operates within purine metabolism; IMP biosynthesis via de novo pathway; IMP from 5-formamido-1-(5-phospho-D-ribosyl)imidazole-4-carboxamide: step 1/1. The sequence is that of Bifunctional purine biosynthesis protein PurH from Escherichia coli O17:K52:H18 (strain UMN026 / ExPEC).